Reading from the N-terminus, the 325-residue chain is Aldo-keto reductase family 1 member A1 (325 aa).

An N-acetylthreonine modification is found at Thr-2. Ser-4 bears the Phosphoserine mark. Residues Gly-11–Gly-20, Thr-21, and Trp-22 contribute to the NADP(+) site. Lys-23 is a glycosylation site (N-linked (Glc) (glycation) lysine). At Ser-38 the chain carries Phosphoserine. Asp-45 serves as a coordination point for NADP(+). The active-site Proton donor is Tyr-50. Lys-68 and Lys-85 each carry an N-linked (Glc) (glycation) lysine glycan. Residue Lys-127 is modified to N6-acetyllysine; alternate. Residue Lys-127 is modified to N6-succinyllysine; alternate. Residue Lys-141 is glycosylated (N-linked (Glc) (glycation) lysine). Lys-145 is modified (N6-succinyllysine). An N-linked (Glc) (glycation) lysine glycan is attached at Lys-153. Residues Ser-162, Asn-163, Ser-211, Leu-213, Ser-215, Ser-216, Lys-263, Ser-264, Ile-265, Thr-266, Arg-269, Gln-272, and Asn-273 each coordinate NADP(+). Ser-211 carries the post-translational modification Phosphoserine.

It belongs to the aldo/keto reductase family. In terms of assembly, monomer. In terms of tissue distribution, widely expressed.

It is found in the cytoplasm. It localises to the cytosol. Its subcellular location is the apical cell membrane. The catalysed reaction is a primary alcohol + NADP(+) = an aldehyde + NADPH + H(+). It carries out the reaction L-gulonate + NADP(+) = aldehydo-D-glucuronate + NADPH + H(+). The enzyme catalyses L-gulono-1,4-lactone + NADP(+) = D-glucurono-3,6-lactone + NADPH + H(+). It catalyses the reaction allyl alcohol + NADP(+) = acrolein + NADPH + H(+). The catalysed reaction is glycerol + NADP(+) = D-glyceraldehyde + NADPH + H(+). It carries out the reaction glycerol + NADP(+) = L-glyceraldehyde + NADPH + H(+). The enzyme catalyses hydroxyacetone + NADP(+) = methylglyoxal + NADPH + H(+). It catalyses the reaction 3-deoxyfructose + NADP(+) = 3-deoxyglucosone + NADPH + H(+). The catalysed reaction is (R)-mevalonate + NADP(+) = (R)-mevaldate + NADPH + H(+). It carries out the reaction pyridine 3-methanol + NADP(+) = pyridine-3-carbaldehyde + NADPH + H(+). The enzyme catalyses S-nitroso-CoA + NADPH + H(+) = sulfinamide-CoA + NADP(+). It catalyses the reaction S-nitrosoglutathione + NADPH + H(+) = S-(hydroxysulfenamide)glutathione + NADP(+). Catalyzes the NADPH-dependent reduction of a wide variety of carbonyl-containing compounds to their corresponding alcohols. Displays enzymatic activity towards endogenous metabolites such as aromatic and aliphatic aldehydes, ketones, monosaccharides and bile acids. Plays an important role in ascorbic acid biosynthesis by catalyzing the reduction of D-glucuronic acid and D-glucurono-gamma-lactone. Functions as a detoxifiying enzyme by reducing a range of toxic aldehydes. Reduces methylglyoxal and 3-deoxyglucosone, which are present at elevated levels under hyperglycemic conditions and are cytotoxic. Involved also in the detoxification of lipid-derived aldehydes like acrolein. Plays a role in the activation of procarcinogens, such as polycyclic aromatic hydrocarbon trans-dihydrodiols, and in the metabolism of various xenobiotics and drugs. Also acts as an inhibitor of protein S-nitrosylation by mediating degradation of S-nitroso-coenzyme A (S-nitroso-CoA), a cofactor required to S-nitrosylate proteins. S-nitroso-CoA reductase activity is involved in reprogramming intermediary metabolism in renal proximal tubules, notably by inhibiting protein S-nitrosylation of isoform 2 of PKM (PKM2). Also acts as a S-nitroso-glutathione reductase by catalyzing the NADPH-dependent reduction of S-nitrosoglutathione. Displays no reductase activity towards retinoids. The sequence is that of Aldo-keto reductase family 1 member A1 (Akr1a1) from Rattus norvegicus (Rat).